The sequence spans 218 residues: Probable transaldolase (218 aa).

Lys87 acts as the Schiff-base intermediate with substrate in catalysis.

It belongs to the transaldolase family. Type 3B subfamily.

It localises to the cytoplasm. It carries out the reaction D-sedoheptulose 7-phosphate + D-glyceraldehyde 3-phosphate = D-erythrose 4-phosphate + beta-D-fructose 6-phosphate. It participates in carbohydrate degradation; pentose phosphate pathway; D-glyceraldehyde 3-phosphate and beta-D-fructose 6-phosphate from D-ribose 5-phosphate and D-xylulose 5-phosphate (non-oxidative stage): step 2/3. Functionally, transaldolase is important for the balance of metabolites in the pentose-phosphate pathway. The protein is Probable transaldolase of Bacteroides fragilis (strain YCH46).